The sequence spans 318 residues: Taste receptor type 2 member 60 (318 aa).

The Extracellular segment spans residues 1 to 7 (MNGDHMV). Residues 8-28 (LGSSVTDKKAIILVTILLLLR) traverse the membrane as a helical segment. At 29-40 (LVAIAGNGFITA) the chain is on the cytoplasmic side. A helical transmembrane segment spans residues 41-61 (ALGVEWVLRRMLLPCDKLLVS). The Extracellular segment spans residues 62-88 (LGASRFCLQSVVMGKTIYVFLHPMAFP). Residues 89–109 (YNPVLQFLAFQWDFLNAATLW) traverse the membrane as a helical segment. Topologically, residues 110-128 (SSTWLSVFYCVKIATFTHP) are cytoplasmic. Residues 129 to 149 (VFFWLKHKLSGWLPWMLFSSV) traverse the membrane as a helical segment. The Extracellular portion of the chain corresponds to 150–183 (GLSSFTTILFFIGNHRMYQNYLRNHLQPWNVTGD). A glycan (N-linked (GlcNAc...) asparagine) is linked at Asn-179. A helical membrane pass occupies residues 184–204 (SIRSYCEKFYLFPLKMITWTM). The Cytoplasmic segment spans residues 205–234 (PTAVFFICMILLITSLGRHRKKALLTTSGF). Residues 235-255 (REPSVQAHIKALLALLSFAML) form a helical membrane-spanning segment. Over 256–264 (FISYFLSLV) the chain is Extracellular. Residues 265–285 (FSAAGIFPPLDFKFWVWESVI) form a helical membrane-spanning segment. The Cytoplasmic segment spans residues 286–318 (YLCAAVHPIILLFSNCRLRAVLKSRRSSRCGTP).

Belongs to the G-protein coupled receptor T2R family. Expressed in subsets of taste receptor cells of the tongue and exclusively in gustducin-positive cells.

It is found in the membrane. In terms of biological role, receptor that may play a role in the perception of bitterness and is gustducin-linked. May play a role in sensing the chemical composition of the gastrointestinal content. The activity of this receptor may stimulate alpha gustducin, mediate PLC-beta-2 activation and lead to the gating of TRPM5. The protein is Taste receptor type 2 member 60 (TAS2R60) of Homo sapiens (Human).